The chain runs to 580 residues: XK-related protein 7 (580 aa).

Over residues 1–22 the composition is skewed to low complexity; that stretch reads MAAKSDGAAAVAGPGPEGPAGA. Positions 1 to 28 are disordered; that stretch reads MAAKSDGAAAVAGPGPEGPAGADRGGAG. 8 consecutive transmembrane segments (helical) span residues 59 to 79, 89 to 109, 260 to 280, 303 to 323, 326 to 346, 355 to 375, 384 to 404, and 415 to 435; these read WVLCALLVFFSDGATDLWLAA, YFGLTLLFVLLPSLVVQLLSF, LLTALSISASLVSLAWTLASY, VLWHLFTIAARTLAFALFASV, LYFGIFIVAHWCIMTFWVIQG, WEEIIYNMVVGIIYIFCWFNV, VTLYYCIVLLENAALTGFWYS, and LILVCVVASSFALGIFFMCVY. The interval 470-516 is disordered; the sequence is TSPPRSLPRTTGAERDGAAVGGERAGTPTPPVFQVRPGLPPTPVARP.

It belongs to the XK family.

It is found in the cell membrane. This Rattus norvegicus (Rat) protein is XK-related protein 7.